The sequence spans 897 residues: Probable bifunctional chitinase/lysozyme (897 aa).

Positions 1 to 24 are cleaved as a signal peptide; the sequence is MKLNIFTKSMIGMGLVCSALPALA. The region spanning 25-91 is the Chitin-binding type-3 1 domain; the sequence is MEAWNNQQGG…SQFGNTLSCE (67 aa). Disordered regions lie at residues 90-127, 182-222, and 287-333; these read CEKS…SNSS, TEIS…PADK, and QYGN…DSVN. A compositionally biased stretch (low complexity) spans 95–111; sequence SSSSSNSNTPASNTPAN. Composition is skewed to polar residues over residues 113 to 127 and 182 to 197; these read GSAT…SNSS and TEIS…TSAP. The Chitin-binding type-3 2 domain occupies 128 to 194; the sequence is VVAWNKQQGG…SETSNPQSCT (67 aa). Residues 198-216 are compositionally biased toward pro residues; sequence QPSPDVKPAPDVKPAPDVQ. The Chitin-binding type-3 3 domain occupies 229–295; it reads VVAWKGQEGS…SQYGNPGSCS (67 aa). The span at 309–318 shows a compositional bias: pro residues; sequence DPTPETPVTP. Residues 322-333 are compositionally biased toward polar residues; sequence NSEPSTPADSVN. 2 consecutive Chitin-binding type-3 domains span residues 337–403 and 459–529; these read LQAW…TTCE and AKAW…PQFN. The GH18 domain maps to 586 to 877; it reads KHVYAPYVDF…TNLSPEFHGL (292 aa). Cysteine 628 and cysteine 673 form a disulfide bridge. Glutamate 700 functions as the Proton donor in the catalytic mechanism.

Belongs to the glycosyl hydrolase 18 family. Chitinase class II subfamily.

It is found in the periplasm. The catalysed reaction is Random endo-hydrolysis of N-acetyl-beta-D-glucosaminide (1-&gt;4)-beta-linkages in chitin and chitodextrins.. The enzyme catalyses Hydrolysis of (1-&gt;4)-beta-linkages between N-acetylmuramic acid and N-acetyl-D-glucosamine residues in a peptidoglycan and between N-acetyl-D-glucosamine residues in chitodextrins.. Bifunctional enzyme with lysozyme/chitinase activity. The protein is Probable bifunctional chitinase/lysozyme (chiA) of Escherichia coli (strain K12).